Reading from the N-terminus, the 184-residue chain is Chromophore lyase CpcS/CpeS 1 (184 aa).

It belongs to the CpcS/CpeS biliprotein lyase family.

Functionally, covalently attaches a chromophore to Cys residue(s) of phycobiliproteins. The sequence is that of Chromophore lyase CpcS/CpeS 1 from Synechococcus sp. (strain JA-3-3Ab) (Cyanobacteria bacterium Yellowstone A-Prime).